Here is a 308-residue protein sequence, read N- to C-terminus: tRNA dimethylallyltransferase 2 (308 aa).

13 to 20 (GPTASGKT) contacts ATP. 15–20 (TASGKT) serves as a coordination point for substrate. An interaction with substrate tRNA region spans residues 38–41 (DSRQ).

Belongs to the IPP transferase family. As to quaternary structure, monomer. Requires Mg(2+) as cofactor.

It carries out the reaction adenosine(37) in tRNA + dimethylallyl diphosphate = N(6)-dimethylallyladenosine(37) in tRNA + diphosphate. In terms of biological role, catalyzes the transfer of a dimethylallyl group onto the adenine at position 37 in tRNAs that read codons beginning with uridine, leading to the formation of N6-(dimethylallyl)adenosine (i(6)A). The polypeptide is tRNA dimethylallyltransferase 2 (Bacteroides fragilis (strain YCH46)).